Here is a 488-residue protein sequence, read N- to C-terminus: (S)-canadine synthase CYP719A21 (488 aa).

Residues 6–26 (LWILTLISTILAVFAAVLIIF) traverse the membrane as a helical segment. A heme-binding site is contributed by Cys432.

Belongs to the cytochrome P450 family. The cofactor is heme.

The protein resides in the membrane. The catalysed reaction is (S)-tetrahydrocolumbamine + reduced [NADPH--hemoprotein reductase] + O2 = (S)-canadine + oxidized [NADPH--hemoprotein reductase] + 2 H2O + H(+). Its pathway is alkaloid biosynthesis. In terms of biological role, cytochrome P450 involved in the biosynthesis of the benzylisoquinoline alkaloid noscapine. Converts (S)-tetrahydrocolumbamine to (S)-canadine. This Papaver somniferum (Opium poppy) protein is (S)-canadine synthase CYP719A21.